A 149-amino-acid chain; its full sequence is Large ribosomal subunit protein bL9 (149 aa).

This sequence belongs to the bacterial ribosomal protein bL9 family.

Binds to the 23S rRNA. This Synechococcus sp. (strain JA-2-3B'a(2-13)) (Cyanobacteria bacterium Yellowstone B-Prime) protein is Large ribosomal subunit protein bL9.